The sequence spans 1562 residues: NAC-alpha domain-containing protein 1 (1562 aa).

The span at 1–13 (MPGEAARAELLLP) shows a compositional bias: low complexity. Disordered stretches follow at residues 1–24 (MPGEAARAELLLPEADRPGPRTDL), 56–110 (FLPS…TEAP), 131–226 (SPRA…ADGD), 249–288 (SGWGLSPQGSMVDERELHPAGTPEPPSSESSLSADSSSSW), 327–365 (TPLSPEEEEEEAVADPDPGGDLAGEGEEDSTSASFLQSL), 381–458 (RDDT…GAYL), 503–941 (TPQA…EPLA), and 953–1423 (GCAP…AMSK). Residues 195 to 208 (GDARDSEAELRDEL) show a composition bias toward basic and acidic residues. The span at 275–287 (SSESSLSADSSSS) shows a compositional bias: low complexity. The span at 331 to 340 (PEEEEEEAVA) shows a compositional bias: acidic residues. Residues 385 to 397 (SAASSDSDSASYA) are compositionally biased toward low complexity. 2 stretches are compositionally biased toward polar residues: residues 449 to 458 (PQTSDRGAYL) and 550 to 564 (QEETSLTLCPDSPQN). Residues 992-1007 (PAALDQVQQDDPQPAA) are compositionally biased toward low complexity. A compositionally biased stretch (basic and acidic residues) spans 1048-1074 (PGREACLEARAHTGDGAKPDSPQKETL). Serine 1068 carries the post-translational modification Phosphoserine. Composition is skewed to low complexity over residues 1172–1182 (APTSAPTSQQP) and 1231–1241 (APGTLAGAALP). Over residues 1254 to 1264 (PQEDSVEDEEP) the composition is skewed to acidic residues. Composition is skewed to low complexity over residues 1265 to 1284 (PGSLGLPPPQAGVQPAAAAV), 1298 to 1308 (SLSPHSPLLSP), and 1335 to 1344 (QSPAGPQGLS). Over residues 1348–1357 (QQEDEDSLEE) the composition is skewed to acidic residues. Phosphoserine is present on serine 1354. The region spanning 1411–1476 (SRSEKKARKA…AKIEDLSQQV (66 aa)) is the NAC-A/B domain.

The protein belongs to the NAC-alpha family.

It localises to the cytoplasm. Its subcellular location is the nucleus. May prevent inappropriate targeting of non-secretory polypeptides to the endoplasmic reticulum (ER). May bind to nascent polypeptide chains as they emerge from the ribosome and block their interaction with the signal recognition particle (SRP), which normally targets nascent secretory peptides to the ER. May also reduce the inherent affinity of ribosomes for protein translocation sites in the ER membrane (M sites). This Homo sapiens (Human) protein is NAC-alpha domain-containing protein 1 (NACAD).